A 134-amino-acid polypeptide reads, in one-letter code: ATP synthase epsilon chain (134 aa).

It belongs to the ATPase epsilon chain family. F-type ATPases have 2 components, CF(1) - the catalytic core - and CF(0) - the membrane proton channel. CF(1) has five subunits: alpha(3), beta(3), gamma(1), delta(1), epsilon(1). CF(0) has three main subunits: a, b and c.

The protein resides in the cell membrane. Its function is as follows. Produces ATP from ADP in the presence of a proton gradient across the membrane. This is ATP synthase epsilon chain from Listeria monocytogenes serotype 4a (strain HCC23).